The chain runs to 402 residues: Putative F-box protein At3g20030 (402 aa).

One can recognise an F-box domain in the interval 1-56 (MTMMSDLSQDLLEEILSRVPRTSLGAVRSTCKRWNTLFKDRILCKAEETRDQFRFI).

The sequence is that of Putative F-box protein At3g20030 from Arabidopsis thaliana (Mouse-ear cress).